A 573-amino-acid chain; its full sequence is 60 kDa heat shock protein, mitochondrial (573 aa).

Residues 1-26 (MLRLPAVLRQIRPVSRALAPHLTRAY) constitute a mitochondrion transit peptide. Residues Lys-75 and 111 to 115 (DGTTT) each bind ATP. Tyr-227 is subject to Phosphotyrosine. Residues Gly-440 and Asp-520 each coordinate ATP.

It is found in the mitochondrion matrix. It catalyses the reaction ATP + H2O + a folded polypeptide = ADP + phosphate + an unfolded polypeptide.. In terms of biological role, chaperonin implicated in mitochondrial protein import and macromolecular assembly. Together with Hsp10, facilitates the correct folding of imported proteins. May also prevent misfolding and promote the refolding and proper assembly of unfolded polypeptides generated under stress conditions in the mitochondrial matrix. The functional units of these chaperonins consist of heptameric rings of the large subunit Hsp60, which function as a back-to-back double ring. In a cyclic reaction, Hsp60 ring complexes bind one unfolded substrate protein per ring, followed by the binding of ATP and association with 2 heptameric rings of the co-chaperonin Hsp10. This leads to sequestration of the substrate protein in the inner cavity of Hsp60 where, for a certain period of time, it can fold undisturbed by other cell components. Synchronous hydrolysis of ATP in all Hsp60 subunits results in the dissociation of the chaperonin rings and the release of ADP and the folded substrate protein. The protein is 60 kDa heat shock protein, mitochondrial of Gallus gallus (Chicken).